Consider the following 580-residue polypeptide: NADH-quinone oxidoreductase subunit C/D (580 aa).

An NADH dehydrogenase I subunit C region spans residues 1 to 171 (MSFDQVIADA…PPFVLTDRLF (171 aa)). The segment at 195–580 (ELMVLNFGPH…IDFVMSDVDR (386 aa)) is NADH dehydrogenase I subunit D.

The protein in the N-terminal section; belongs to the complex I 30 kDa subunit family. In the C-terminal section; belongs to the complex I 49 kDa subunit family. In terms of assembly, NDH-1 is composed of 13 different subunits. Subunits NuoB, CD, E, F, and G constitute the peripheral sector of the complex.

The protein localises to the cell inner membrane. It catalyses the reaction a quinone + NADH + 5 H(+)(in) = a quinol + NAD(+) + 4 H(+)(out). NDH-1 shuttles electrons from NADH, via FMN and iron-sulfur (Fe-S) centers, to quinones in the respiratory chain. The immediate electron acceptor for the enzyme in this species is believed to be ubiquinone. Couples the redox reaction to proton translocation (for every two electrons transferred, four hydrogen ions are translocated across the cytoplasmic membrane), and thus conserves the redox energy in a proton gradient. In Cereibacter sphaeroides (strain ATCC 17025 / ATH 2.4.3) (Rhodobacter sphaeroides), this protein is NADH-quinone oxidoreductase subunit C/D.